The primary structure comprises 201 residues: CASP-like protein 2D1 (201 aa).

Topologically, residues 1 to 26 (MRSGEGSTAAAAAAEEEKVKVAAPFR) are cytoplasmic. The helical transmembrane segment at 27–47 (LAELGLRVCAVPLAVASVWEM) threads the bilayer. The Extracellular portion of the chain corresponds to 48-70 (ATNKQVDETYGEVRFSDLSGFRY). The helical transmembrane segment at 71–91 (LVWINAITAAYSVASILLSSC) threads the bilayer. Topologically, residues 92 to 98 (RFITRFD) are cytoplasmic. Residues 99–119 (WLIFILDQASAYLLLTSASAA) form a helical membrane-spanning segment. Residues 120 to 148 (AEVVYLAREGDREVSWGEVCSYFGRFCGA) are Extracellular-facing. Residues 149-169 (ATVSVALNAAALLCFMALSLI) form a helical membrane-spanning segment. Residues 170-201 (SAFRVFTKFNPPSQSNSKQQLSQEQGKPVVSG) lie on the Cytoplasmic side of the membrane. Residues 180–194 (PPSQSNSKQQLSQEQ) are compositionally biased toward polar residues. The segment at 180–201 (PPSQSNSKQQLSQEQGKPVVSG) is disordered.

The protein belongs to the Casparian strip membrane proteins (CASP) family. As to quaternary structure, homodimer and heterodimers.

The protein localises to the cell membrane. The sequence is that of CASP-like protein 2D1 from Oryza sativa subsp. indica (Rice).